A 300-amino-acid chain; its full sequence is Lysenin-related protein 3 (300 aa).

Residues 12–35 are N-terminal cap domain; sequence EEIEVDVVAVWKEGYVYENRGDTS. The tract at residues 36 to 109 is beta-hairpin domain; sequence VEQKITMTKG…SQVIEHTVTI (74 aa). An N-terminal cap domain region spans residues 110-158; it reads PPTSKFTRWKLNADVGGTDIEYMYLIDEVTPISVTQTIPQVIRSRAKIL. The tract at residues 159–299 is C-terminal receptor-binding domain; that stretch reads VGRQIHLGTT…EDKWILEVVN (141 aa). An N-(acyl)-sphingosylphosphocholine-binding residues include K187, S229, Y235, and Y284. A disulfide bridge links C274 with C285.

This sequence belongs to the lysenin family. Binds to sphingomyelin as a monomer by using its C-terminal domain. Forms a nonamer when sphingomyelin/LRP-3 ratio is lower than ca 500. Oligomerization, but not binding, is influenced by the fluidity of sphingomyelin. In terms of tissue distribution, expressed by coelomocytes.

Its subcellular location is the secreted. It is found in the target cell membrane. Pore-forming toxin that specifically binds sphingomyelin in the plasma membrane of various cells. Has antibacterial and hemolytic activity. The polypeptide is Lysenin-related protein 3 (Eisenia fetida (Red wiggler worm)).